The sequence spans 461 residues: Protein IQ-DOMAIN 2 (461 aa).

The interval 1-55 is disordered; sequence MGKKAKWFSSVKKAFSPDSKKSKQKLAEGQNGVISNPPVVDNVRQSSSSPPPALA. The 29-residue stretch at 114–142 folds into the IQ domain; the sequence is EEAAAILIQTIFRGYLARRALRAMRGLVR. Residues 141–158 are calmodulin-binding; the sequence is VRLKLLMEGSVVKRQAAN. The segment at 278–461 is disordered; it reads PLESSEKEQS…GVTVTNGAGS (184 aa). Residues 310 to 345 are compositionally biased toward polar residues; the sequence is LTRNGSTQPNTPSSARGTPRNKNSFFSPPTPSRLNQ. Positions 425-432 match the Nuclear localization signal motif; it reads KKRLSYPT.

The protein belongs to the IQD family. As to quaternary structure, binds to multiple calmodulin (CaM) in the presence of Ca(2+) and CaM-like proteins.

Its subcellular location is the nucleus. The protein localises to the cytoplasm. It localises to the cytoskeleton. May be involved in cooperative interactions with calmodulins or calmodulin-like proteins. Recruits calmodulin proteins to microtubules, thus being a potential scaffold in cellular signaling and trafficking. May associate with nucleic acids and regulate gene expression at the transcriptional or post-transcriptional level. In Arabidopsis thaliana (Mouse-ear cress), this protein is Protein IQ-DOMAIN 2.